Here is a 132-residue protein sequence, read N- to C-terminus: MKVQRMAYEMGRYISEEDLAKLIAETSGYPWRWWQQPTLLTPRLWKTLEMLNQIKVHTTKYHNELNRLLKTGKFISDLQLACQAVPRPLTIALFCTLLLWAAEYSFCGEKEETWARCKSAAKVLYSLLQDRV.

The sequence is that of Protein LH2 from Pantherophis guttatus (Corn snake).